A 1610-amino-acid polypeptide reads, in one-letter code: E3 ubiquitin-protein ligase listerin (1610 aa).

Residues 1-10 (MKKKSTDLYG) are compositionally biased toward basic and acidic residues. Residues 1–20 (MKKKSTDLYGRKNPGMQSMS) form a disordered region. HEAT repeat units lie at residues 110-148 (LKIFVFMSVLSSALQKKLAPWLKFYITPWVMGFFDSDRA), 314-351 (VPMLRLLSNMISNFPNEVHQFANDSKRPLSKLFSNLIT), 372-408 (IGAMQLVPSIESVDELCDAFLETANQEQRFLSTEVYD), 409-443 (CLLNFLSFVYTDSSDPQIKDHVRDRLRTIFTRYFK), 590-626 (SPAFTLLRDILLLLKDYADLSEPWENVANQFTVSFDE), 627-664 (LENIRVLNSLPSLFADGKLRGKISLVKTLVEYYDTAVF), 736-773 (KSLYSLLPVILFSKPEDDGHVAAHFESIFSLLKEKALE), 965-1003 (GKMPVLFKRFKNLSSAENTTSFSIFAAQGLTDFLIVVSN), 1119-1156 (CCFLRFMYYFLPTVFSLSGSYWNSIFDYIKYAMKMSVV), 1322-1354 (RVYLLVWDLIFYHFEETTYNIKLSIINQLHAMD), 1355-1393 (LLRPLLNTLVEILNLSYDRPINVDKYPKIDYNLMDYSSA), and 1435-1473 (FTGYNVSPLLISASLDDVERSIESEDFQSVGDVNVKVNR). The RING-type; atypical zinc-finger motif lies at 1558–1604 (CAICYSVLSVERTLPNKRCGTCRHKFHASCLYKWFKSSNSSRCPLCR).

This sequence belongs to the LTN1 family. Component of the ribosome quality control complex (RQC), composed of the E3 ubiquitin ligase rkr1/ltn1, rqc1 and mtr1/rqc2, as well as cdc48 and its ubiquitin-binding cofactors. RQC forms a stable complex with 60S ribosomal subunits.

The protein localises to the nucleus. It is found in the cytoplasm. It localises to the cytosol. The catalysed reaction is S-ubiquitinyl-[E2 ubiquitin-conjugating enzyme]-L-cysteine + [acceptor protein]-L-lysine = [E2 ubiquitin-conjugating enzyme]-L-cysteine + N(6)-ubiquitinyl-[acceptor protein]-L-lysine.. It functions in the pathway protein modification; protein ubiquitination. Its function is as follows. E3 ubiquitin-protein ligase component of the ribosome quality control complex (RQC), a ribosome-associated complex that mediates ubiquitination and extraction of incompletely synthesized nascent chains for proteasomal degradation. Mediates ubiquitination of proteins derived from mRNAs lacking stop codons (non-stop proteins) and other translation arrest products induced by poly-lysine sequences and tandem rare codons. Ubiquitination leads to cdc48 recruitment for extraction and degradation of the incomplete translation product. May indirectly play a role in chromatin function and transcription. This is E3 ubiquitin-protein ligase listerin from Schizosaccharomyces pombe (strain 972 / ATCC 24843) (Fission yeast).